Reading from the N-terminus, the 144-residue chain is Large ribosomal subunit protein uL15 (144 aa).

A disordered region spans residues 1–52 (MRLNTISSAPGAKQAEKRVGRGIGSGWGKTCGRGHKGQKSRSGGFHKVGFEG). Positions 21–31 (RGIGSGWGKTC) are enriched in gly residues.

The protein belongs to the universal ribosomal protein uL15 family. As to quaternary structure, part of the 50S ribosomal subunit.

In terms of biological role, binds to the 23S rRNA. This Nitrosococcus oceani (strain ATCC 19707 / BCRC 17464 / JCM 30415 / NCIMB 11848 / C-107) protein is Large ribosomal subunit protein uL15.